The sequence spans 473 residues: MTAKPGFNDYIVKDISLAEFGRKEISLAETEMPGLMATREEYGPKQPLKGARIAGSLHMTIQTAVLIETLAALGADIRWVSCNIYSTQDHAAAAIAAAGIPVFAVKGETLADYWDYTAKLFDWHGGGHPNMILDDGGDATMYVHLGLRAENGDTAFLDKPASEEEEVFFALLKKQLKEKPKGYFAAIAASIKGVSEETTTGVHRLYDMQKAGTLLWPAINVNDSVTKSKFDNLYGCRESLVDGIRRGTDVMMSGKVAMVAGFGDVGKGSAASLRQAGCRVLVSEIDPICALQAAMEGYEVVTMEDAAPRADIFVTATGNKDIITIEHMRAMKDRAIVCNIGHFDNEIQVASLKNLKWTNIKPQVDEITFPDGKRMILLSEGRLVNLGNAMGHPSFVMSASFTNQTLAQIELYANNKDGKYKKEVYVLPKSLDEKVARLHLAKIGVKLTELRPDQAAYIGVKQEGPFKSDHYRY.

Substrate-binding residues include Thr60, Asp135, and Glu197. Residue Thr198 to Thr200 participates in NAD(+) binding. Residues Lys227 and Asp231 each coordinate substrate. NAD(+)-binding positions include Asn232, Gly261–Gly266, Glu284, Asn319, Ile340–His342, and Asn385.

It belongs to the adenosylhomocysteinase family. NAD(+) is required as a cofactor.

It is found in the cytoplasm. The enzyme catalyses S-adenosyl-L-homocysteine + H2O = L-homocysteine + adenosine. It participates in amino-acid biosynthesis; L-homocysteine biosynthesis; L-homocysteine from S-adenosyl-L-homocysteine: step 1/1. Functionally, may play a key role in the regulation of the intracellular concentration of adenosylhomocysteine. The polypeptide is Adenosylhomocysteinase (Bradyrhizobium sp. (strain BTAi1 / ATCC BAA-1182)).